The sequence spans 163 residues: Cyanate hydratase (163 aa).

Catalysis depends on residues Arg-103, Glu-106, and Ser-129.

It belongs to the cyanase family.

The catalysed reaction is cyanate + hydrogencarbonate + 3 H(+) = NH4(+) + 2 CO2. In terms of biological role, catalyzes the reaction of cyanate with bicarbonate to produce ammonia and carbon dioxide. The sequence is that of Cyanate hydratase from Talaromyces marneffei (strain ATCC 18224 / CBS 334.59 / QM 7333) (Penicillium marneffei).